We begin with the raw amino-acid sequence, 154 residues long: 3-dehydroquinate dehydratase (154 aa).

Tyr26 acts as the Proton acceptor in catalysis. Substrate-binding residues include Asn77, His83, and Asp90. Residue His103 is the Proton donor of the active site. Residues 104 to 105 (IS) and Arg114 contribute to the substrate site.

The protein belongs to the type-II 3-dehydroquinase family. Homododecamer.

The enzyme catalyses 3-dehydroquinate = 3-dehydroshikimate + H2O. The protein operates within metabolic intermediate biosynthesis; chorismate biosynthesis; chorismate from D-erythrose 4-phosphate and phosphoenolpyruvate: step 3/7. Catalyzes a trans-dehydration via an enolate intermediate. This is 3-dehydroquinate dehydratase from Buchnera aphidicola subsp. Baizongia pistaciae (strain Bp).